We begin with the raw amino-acid sequence, 63 residues long: Protein D-63 (63 aa).

As to quaternary structure, homodimer.

In terms of biological role, this protein may be involved in virus assembly. The protein is Protein D-63 of Saccharolobus solfataricus (Sulfolobus solfataricus).